The sequence spans 949 residues: UvrABC system protein A (949 aa).

Gly-42–Ser-49 is an ATP binding site. The C4-type zinc-finger motif lies at Cys-262–Cys-289. ABC transporter domains follow at residues Trp-319–Val-596 and Val-616–Lys-945. Gly-649 to Ser-656 provides a ligand contact to ATP. Residues Cys-748–Cys-774 form a C4-type zinc finger.

This sequence belongs to the ABC transporter superfamily. UvrA family. As to quaternary structure, forms a heterotetramer with UvrB during the search for lesions.

The protein resides in the cytoplasm. The UvrABC repair system catalyzes the recognition and processing of DNA lesions. UvrA is an ATPase and a DNA-binding protein. A damage recognition complex composed of 2 UvrA and 2 UvrB subunits scans DNA for abnormalities. When the presence of a lesion has been verified by UvrB, the UvrA molecules dissociate. This Neisseria meningitidis serogroup B (strain ATCC BAA-335 / MC58) protein is UvrABC system protein A.